The following is a 33-amino-acid chain: Photosystem II reaction center protein Psb30 (33 aa).

A helical membrane pass occupies residues 5 to 25; it reads LIVQLTSLILISIAGPIIIAL.

It belongs to the Psb30/Ycf12 family. In terms of assembly, PSII is composed of 1 copy each of membrane proteins PsbA, PsbB, PsbC, PsbD, PsbE, PsbF, PsbH, PsbI, PsbJ, PsbK, PsbL, PsbM, PsbT, PsbY, PsbZ, Psb30/Ycf12, peripheral proteins of the oxygen-evolving complex and a large number of cofactors. It forms dimeric complexes.

The protein resides in the plastid. It is found in the chloroplast thylakoid membrane. Functionally, a core subunit of photosystem II (PSII), probably helps stabilize the reaction center. In Euglena myxocylindracea, this protein is Photosystem II reaction center protein Psb30.